A 741-amino-acid polypeptide reads, in one-letter code: Fibrinogen alpha chain (741 aa).

An N-terminal signal peptide occupies residues 1 to 18; sequence MIPVTILCVLLCLNLAWA. Gln-19 bears the Pyrrolidone carboxylic acid mark. The stretch at 67-506 forms a coiled coil; the sequence is CCRMQGIIDD…STRRSYNGKD (440 aa). A disordered region spans residues 270 to 307; that stretch reads VAEARGDSSPSHTGKLITSSHRRESPSLVDKTSSASSV. The span at 277–288 shows a compositional bias: polar residues; it reads SSPSHTGKLITS. An intrachain disulfide couples Cys-310 to Cys-341. Composition is skewed to low complexity over residues 381-398 and 435-449; these read STSS…HVTG and SASH…SSSS. Residues 381–510 form a disordered region; the sequence is STSSRHSIGS…SYNGKDCDDI (130 aa). Residues 450–459 show a composition bias toward polar residues; it reads FNKGGSTFET. The region spanning 498 to 739 is the Fibrinogen C-terminal domain; it reads TRRSYNGKDC…VVRMKIRPLE (242 aa). The Ca(2+) site is built by Asp-666, Asp-668, Trp-670, and Glu-672. Cys-674 and Cys-687 are disulfide-bonded.

In terms of assembly, heterohexamer; disulfide linked. Contains 2 sets of 3 non-identical chains (alpha, beta and gamma). The 2 heterotrimers are in head to head conformation with the N-termini in a small central domain. In terms of processing, conversion of fibrinogen to fibrin is triggered by thrombin, which cleaves fibrinopeptides A and B from alpha and beta chains, and thus exposes the N-terminal polymerization sites responsible for the formation of the soft clot. The soft clot is converted into the hard clot by factor XIIIA which catalyzes the epsilon-(gamma-glutamyl)lysine cross-linking between gamma chains (stronger) and between alpha chains (weaker) of different monomers. Forms F13A-mediated cross-links between a glutamine and the epsilon-amino group of a lysine residue, forming fibronectin-fibrinogen heteropolymers.

The protein localises to the secreted. Its function is as follows. Cleaved by the protease thrombin to yield monomers which, together with fibrinogen beta (FGB) and fibrinogen gamma (FGG), polymerize to form an insoluble fibrin matrix. Fibrin has a major function in hemostasis as one of the primary components of blood clots. The polypeptide is Fibrinogen alpha chain (FGA) (Gallus gallus (Chicken)).